The following is a 102-amino-acid chain: Small ribosomal subunit protein uS10 (102 aa).

This sequence belongs to the universal ribosomal protein uS10 family. Part of the 30S ribosomal subunit.

In terms of biological role, involved in the binding of tRNA to the ribosomes. This is Small ribosomal subunit protein uS10 from Micrococcus luteus (strain ATCC 4698 / DSM 20030 / JCM 1464 / CCM 169 / CCUG 5858 / IAM 1056 / NBRC 3333 / NCIMB 9278 / NCTC 2665 / VKM Ac-2230) (Micrococcus lysodeikticus).